The primary structure comprises 643 residues: Pescadillo homolog (643 aa).

One can recognise a BRCT domain in the interval 319-412; that stretch reads KLKTLFKGLK…RLLPTNKYFM (94 aa). Disordered stretches follow at residues 437–475, 492–571, and 609–643; these read AARK…PENE, TDSL…YREN, and DKNA…QILA. A compositionally biased stretch (acidic residues) spans 464–475; it reads SDDEEVQDPENE. The span at 492–518 shows a compositional bias: basic and acidic residues; it reads TDSLNSGKKEGADDATDNGKDAAEKKQ. The span at 524-544 shows a compositional bias: acidic residues; that stretch reads GESDDEDEEEEDDDDGEEEED. Positions 569-643 form a coiled coil; it reads RENEAEKKIV…QKQQRKQILA (75 aa). Positions 609–635 are enriched in basic and acidic residues; the sequence is DKNARLLANKRERIEKQKRAEQMEKQK.

This sequence belongs to the pescadillo family.

The protein localises to the nucleus. It is found in the nucleolus. It localises to the nucleoplasm. Its function is as follows. Required for maturation of ribosomal RNAs and formation of the large ribosomal subunit. This Anopheles gambiae (African malaria mosquito) protein is Pescadillo homolog.